The chain runs to 204 residues: Holliday junction branch migration complex subunit RuvA (204 aa).

The tract at residues 1–64 (MISRMKGIIL…EDAQLLYGFH (64 aa)) is domain I. The domain II stretch occupies residues 65–143 (HPKERAMFSE…NLNKNLFKST (79 aa)). The flexible linker stretch occupies residues 144–155 (ADHMLSSVSTDL). Positions 156–204 (SAKSAEAEAISALISLGYKPQEAAQLIKNIAQPDLDSQALIKHALRSTL) are domain III.

Belongs to the RuvA family. In terms of assembly, homotetramer. Forms an RuvA(8)-RuvB(12)-Holliday junction (HJ) complex. HJ DNA is sandwiched between 2 RuvA tetramers; dsDNA enters through RuvA and exits via RuvB. An RuvB hexamer assembles on each DNA strand where it exits the tetramer. Each RuvB hexamer is contacted by two RuvA subunits (via domain III) on 2 adjacent RuvB subunits; this complex drives branch migration. In the full resolvosome a probable DNA-RuvA(4)-RuvB(12)-RuvC(2) complex forms which resolves the HJ.

Its subcellular location is the cytoplasm. The RuvA-RuvB-RuvC complex processes Holliday junction (HJ) DNA during genetic recombination and DNA repair, while the RuvA-RuvB complex plays an important role in the rescue of blocked DNA replication forks via replication fork reversal (RFR). RuvA specifically binds to HJ cruciform DNA, conferring on it an open structure. The RuvB hexamer acts as an ATP-dependent pump, pulling dsDNA into and through the RuvAB complex. HJ branch migration allows RuvC to scan DNA until it finds its consensus sequence, where it cleaves and resolves the cruciform DNA. The polypeptide is Holliday junction branch migration complex subunit RuvA (Hamiltonella defensa subsp. Acyrthosiphon pisum (strain 5AT)).